A 317-amino-acid chain; its full sequence is tRNA pseudouridine synthase B (317 aa).

Asp-47 (nucleophile) is an active-site residue.

The protein belongs to the pseudouridine synthase TruB family. Type 1 subfamily.

It carries out the reaction uridine(55) in tRNA = pseudouridine(55) in tRNA. In terms of biological role, responsible for synthesis of pseudouridine from uracil-55 in the psi GC loop of transfer RNAs. The sequence is that of tRNA pseudouridine synthase B from Shewanella woodyi (strain ATCC 51908 / MS32).